Here is a 405-residue protein sequence, read N- to C-terminus: Tryptophan synthase beta chain (405 aa).

Residue K98 is modified to N6-(pyridoxal phosphate)lysine.

The protein belongs to the TrpB family. In terms of assembly, tetramer of two alpha and two beta chains. Pyridoxal 5'-phosphate is required as a cofactor.

It carries out the reaction (1S,2R)-1-C-(indol-3-yl)glycerol 3-phosphate + L-serine = D-glyceraldehyde 3-phosphate + L-tryptophan + H2O. It participates in amino-acid biosynthesis; L-tryptophan biosynthesis; L-tryptophan from chorismate: step 5/5. The beta subunit is responsible for the synthesis of L-tryptophan from indole and L-serine. The polypeptide is Tryptophan synthase beta chain (Xylella fastidiosa (strain M23)).